Here is a 310-residue protein sequence, read N- to C-terminus: uncharacterized protein (310 aa).

Disordered stretches follow at residues Met1–Met53, Pro78–Asn127, and Gln153–Leu217. The span at Gly11–Asp25 shows a compositional bias: acidic residues. 2 stretches are compositionally biased toward polar residues: residues Ser37–Leu49 and Pro78–Pro88. Composition is skewed to low complexity over residues Gln94–Thr126, Pro164–Thr184, and Tyr192–Thr208. Residues Asp268–Gln299 adopt a coiled-coil conformation.

This is an uncharacterized protein from Dictyostelium discoideum (Social amoeba).